The sequence spans 352 residues: MASSINGRKPSEIFKAQALLYKHIYAFIDSMSLKWAVGMNIPNIIHNHGKPISLSNLVSILQVPSSKIGNVRRLMRYLAHNGFFEIITKEEESYALTVASELLVRGSDLCLAPMVECVLDPTLSGSYHELKKWIYEEDLTLFGVTLGSGFWDFLDKNPEYNTSFNDAMASDSKLINLALRDCDFVFDGLESIVDVGGGTGTTAKIICETFPKLKCIVFDRPQVVENLSGSNNLTYVGGDMFTSIPNADAVLLKYILHNWTDKDCLRILKKCKEAVTNDGKRGKVTIIDMVINEKKDENQVTQIKLLMDVNMACLNGKERNEEEWKKLFIEAGFQHYKISPLTGFLSLIEIYP.

Position 118 to 127 (118 to 127) interacts with substrate; sequence VLDPTLSGSY. 5 residues coordinate S-adenosyl-L-methionine: Gly-196, Asp-219, Asp-239, Met-240, and Lys-253. The active-site Proton acceptor is the His-257.

The protein belongs to the class I-like SAM-binding methyltransferase superfamily. Cation-independent O-methyltransferase family. COMT subfamily. As to quaternary structure, homodimer.

It carries out the reaction a 7-hydroxyisoflavone + S-adenosyl-L-methionine = a 7-methoxyisoflavone + S-adenosyl-L-homocysteine + H(+). The protein operates within phytoalexin biosynthesis; medicarpin biosynthesis. In terms of biological role, transfers a methyl group to 7-hydroxyls of the isoflavones daidzein, genistein and 6,7,4'-trihydroxyisoflavone. Can also methylate (+)6a-hydroxymaackiain with lower efficiency. This is Isoflavone-7-O-methyltransferase 9 from Medicago sativa (Alfalfa).